The following is a 488-amino-acid chain: MIQVLLVTICLAVFPYQGSSIILESGNVNDYEVVYPQKVPALPKRAVQQKYEDAMQYEFKVNGEPVVLHLEKNKGLFSEDYSETHYSPDGREITTYPPVEDHCYYHGRIENDADSTTSISACNGLKGHFKLQGETYFIESLKLPDSEAHAVFKYENVEKEDGAPKMCGVTQNWESYEPVKKASQLNFPPDGRIEFLQRYIELVIVADHRMYTKYDGDKTEISSIIYEIVNILTQNYRPMHIRVALTGLEIWSSGELSNVTLSADDTLDSFGEWRERDLLNRKRHDNAQSLTGMIFSENIEGRAYKESMCDLKRSVGIVRDYRTRRHFVANIMAHEMGHNLGIDHDRDSCTCDASSCIMSATVSNEPSSRFSDCSLNQYLSDIIHNPLASYCLYNEPSKTDIVSPPVCGNYYLEVGEDCDCGPPANCQNPCCDAATCRLTPGSQCAEGLCCEQCSFMKEGTVCRIARGDDLDDYCNGISAGCPRNPSHA.

The signal sequence occupies residues 1–20 (MIQVLLVTICLAVFPYQGSS). The propeptide occupies 21–195 (IILESGNVND…NFPPDGRIEF (175 aa)). Positions 198 to 394 (RYIELVIVAD…NPLASYCLYN (197 aa)) constitute a Peptidase M12B domain. Glutamate 201 contacts Ca(2+). An N-linked (GlcNAc...) asparagine glycan is attached at asparagine 258. Aspartate 285 provides a ligand contact to Ca(2+). Disulfide bonds link cysteine 309–cysteine 391, cysteine 349–cysteine 373, and cysteine 351–cysteine 356. Histidine 334 serves as a coordination point for Zn(2+). Residue glutamate 335 is part of the active site. Residues histidine 338 and histidine 344 each coordinate Zn(2+). Ca(2+) is bound by residues cysteine 391, asparagine 394, valine 406, asparagine 409, glutamate 413, glutamate 416, and aspartate 419. Positions 404-488 (PPVCGNYYLE…AGCPRNPSHA (85 aa)) constitute a Disintegrin domain. Cystine bridges form between cysteine 407-cysteine 426, cysteine 418-cysteine 436, cysteine 420-cysteine 431, cysteine 430-cysteine 453, cysteine 444-cysteine 450, cysteine 449-cysteine 474, and cysteine 462-cysteine 481. A Cell attachment site motif is present at residues 466 to 468 (RGD).

Belongs to the venom metalloproteinase (M12B) family. P-II subfamily. P-IIb sub-subfamily. Monomer. It depends on Zn(2+) as a cofactor. As to expression, expressed by the venom gland.

The protein localises to the secreted. Inhibits ADP-induced human platelet aggregation, inhibits bovine aortic endothelial cells (BAEC) migration, has anti-angiogenic activity and induces BAEC and human micro-vascular endothelial cell (HMEC) apoptosis. The metalloproteinase domain may act in hemorrhage. The protein is Zinc metalloproteinase-disintegrin agkistin of Gloydius halys (Chinese water mocassin).